The sequence spans 417 residues: Serine hydroxymethyltransferase (417 aa).

(6S)-5,6,7,8-tetrahydrofolate is bound by residues L121 and G125 to L127. Residue K229 is modified to N6-(pyridoxal phosphate)lysine. S355 to F357 lines the (6S)-5,6,7,8-tetrahydrofolate pocket.

Belongs to the SHMT family. Homodimer. Pyridoxal 5'-phosphate serves as cofactor.

It localises to the cytoplasm. It catalyses the reaction (6R)-5,10-methylene-5,6,7,8-tetrahydrofolate + glycine + H2O = (6S)-5,6,7,8-tetrahydrofolate + L-serine. The protein operates within one-carbon metabolism; tetrahydrofolate interconversion. It participates in amino-acid biosynthesis; glycine biosynthesis; glycine from L-serine: step 1/1. Functionally, catalyzes the reversible interconversion of serine and glycine with tetrahydrofolate (THF) serving as the one-carbon carrier. This reaction serves as the major source of one-carbon groups required for the biosynthesis of purines, thymidylate, methionine, and other important biomolecules. Also exhibits THF-independent aldolase activity toward beta-hydroxyamino acids, producing glycine and aldehydes, via a retro-aldol mechanism. This chain is Serine hydroxymethyltransferase, found in Edwardsiella ictaluri (strain 93-146).